We begin with the raw amino-acid sequence, 118 residues long: Large ribosomal subunit protein bL20 (118 aa).

Belongs to the bacterial ribosomal protein bL20 family.

Functionally, binds directly to 23S ribosomal RNA and is necessary for the in vitro assembly process of the 50S ribosomal subunit. It is not involved in the protein synthesizing functions of that subunit. The polypeptide is Large ribosomal subunit protein bL20 (Lactobacillus delbrueckii subsp. bulgaricus (strain ATCC BAA-365 / Lb-18)).